A 150-amino-acid chain; its full sequence is SsrA-binding protein (150 aa).

Belongs to the SmpB family.

It localises to the cytoplasm. Its function is as follows. Required for rescue of stalled ribosomes mediated by trans-translation. Binds to transfer-messenger RNA (tmRNA), required for stable association of tmRNA with ribosomes. tmRNA and SmpB together mimic tRNA shape, replacing the anticodon stem-loop with SmpB. tmRNA is encoded by the ssrA gene; the 2 termini fold to resemble tRNA(Ala) and it encodes a 'tag peptide', a short internal open reading frame. During trans-translation Ala-aminoacylated tmRNA acts like a tRNA, entering the A-site of stalled ribosomes, displacing the stalled mRNA. The ribosome then switches to translate the ORF on the tmRNA; the nascent peptide is terminated with the 'tag peptide' encoded by the tmRNA and targeted for degradation. The ribosome is freed to recommence translation, which seems to be the essential function of trans-translation. The polypeptide is SsrA-binding protein (Coprothermobacter proteolyticus (strain ATCC 35245 / DSM 5265 / OCM 4 / BT)).